The sequence spans 191 residues: MLAIGITGSYASGKTFILDYLAEKGYKTFCADRCIKELYQDLKIQTGILKLLPELETFNIGKISNLIYNNDLAREKLQNFIYPLLIEKLIQFKQENVNSKFGFAEIPLLYEAKFDKYFDFVVTVHCSEEIRMQRATTRSSFDVEIYNKIKEIQLSQESKIAKADFAINSGVDMLDLEKQINNLIANLECRV.

In terms of domain architecture, DPCK spans 3–191 (AIGITGSYAS…NLIANLECRV (189 aa)). Residue 11-16 (ASGKTF) coordinates ATP.

This sequence belongs to the CoaE family.

It is found in the cytoplasm. It carries out the reaction 3'-dephospho-CoA + ATP = ADP + CoA + H(+). It functions in the pathway cofactor biosynthesis; coenzyme A biosynthesis; CoA from (R)-pantothenate: step 5/5. Its function is as follows. Catalyzes the phosphorylation of the 3'-hydroxyl group of dephosphocoenzyme A to form coenzyme A. The sequence is that of Dephospho-CoA kinase from Rickettsia bellii (strain RML369-C).